The primary structure comprises 183 residues: uncharacterized protein (183 aa).

To M.leprae ML2442.

This is an uncharacterized protein from Mycobacterium tuberculosis (strain CDC 1551 / Oshkosh).